Here is a 598-residue protein sequence, read N- to C-terminus: Elongation factor 4 2 (598 aa).

Residues 2-184 (KHIRNFCIIA…GIVKNLPAPK (183 aa)) form the tr-type G domain. GTP is bound by residues 14–19 (DHGKST) and 131–134 (NKID).

This sequence belongs to the TRAFAC class translation factor GTPase superfamily. Classic translation factor GTPase family. LepA subfamily.

The protein resides in the cell inner membrane. The enzyme catalyses GTP + H2O = GDP + phosphate + H(+). In terms of biological role, required for accurate and efficient protein synthesis under certain stress conditions. May act as a fidelity factor of the translation reaction, by catalyzing a one-codon backward translocation of tRNAs on improperly translocated ribosomes. Back-translocation proceeds from a post-translocation (POST) complex to a pre-translocation (PRE) complex, thus giving elongation factor G a second chance to translocate the tRNAs correctly. Binds to ribosomes in a GTP-dependent manner. This chain is Elongation factor 4 2, found in Rhodopirellula baltica (strain DSM 10527 / NCIMB 13988 / SH1).